A 235-amino-acid polypeptide reads, in one-letter code: Probable WRKY transcription factor 66 (235 aa).

The WRKY DNA-binding region spans 79–147 (SPTPAHIDGF…YVGQHACEAP (69 aa)).

The protein belongs to the WRKY group III family.

It localises to the nucleus. In terms of biological role, transcription factor. Interacts specifically with the W box (5'-(T)TGAC[CT]-3'), a frequently occurring elicitor-responsive cis-acting element. In Arabidopsis thaliana (Mouse-ear cress), this protein is Probable WRKY transcription factor 66 (WRKY66).